Reading from the N-terminus, the 287-residue chain is Cyclopropane mycolic acid synthase 3 (287 aa).

Residues 33–34 (YS), 68–76 (LLDIGCGWG), 94–99 (TLSENQ), and 123–124 (WE) contribute to the S-adenosyl-L-methionine site. Residue Cys269 is part of the active site.

Belongs to the CFA/CMAS family. Homodimer.

It localises to the cytoplasm. The catalysed reaction is a 1-acyl-2-(9Z)-enoyl-sn-glycero-3-phospholipid + S-adenosyl-L-methionine = a 1-acyl-2-(9-cyclopronane)-acyl-sn-glycero-3-phospholipid + S-adenosyl-L-homocysteine + H(+). The protein operates within lipid metabolism; mycolic acid biosynthesis. Functionally, involved in the phagosome maturation block (PMB). Catalyzes the conversion of a double bond to a cyclopropane ring at the proximal position of an alpha mycolic acid via the transfer of a methylene group from S-adenosyl-L-methionine. It can use cis, cis 11,14-eicosadienoic acid and linoelaidic acid as substrate. Cyclopropanated mycolic acids are key factors participating in cell envelope permeability, host immunomodulation and persistence. This chain is Cyclopropane mycolic acid synthase 3 (pcaA), found in Mycobacterium tuberculosis (strain CDC 1551 / Oshkosh).